A 233-amino-acid chain; its full sequence is MAKLTKRMRVIREKVDVTREYEINEAVALLKELATAKFVESVDVAVNLGIDARKSDQNVRGATVLPHGTGRDIRVAVFAQGANAEAAKEAGADIVGMEDLAEQVKKGEMNFDVVVASPDAMRVVGQLGTILGPRGLMPNPKVGTVTPNVAEAVKNAKAGQVRYRNDKNGIIHTTIGKVDFSAEQIKENLEALLVALKKAKPSSAKGSYLKKVSISTTMGAGVAVDQGTLNTQA.

Belongs to the universal ribosomal protein uL1 family. As to quaternary structure, part of the 50S ribosomal subunit.

Functionally, binds directly to 23S rRNA. The L1 stalk is quite mobile in the ribosome, and is involved in E site tRNA release. Its function is as follows. Protein L1 is also a translational repressor protein, it controls the translation of the L11 operon by binding to its mRNA. This is Large ribosomal subunit protein uL1 from Vibrio vulnificus (strain CMCP6).